The sequence spans 239 residues: Tetraspanin-9 (239 aa).

Over 1-13 (MARGCLCCLKYMM) the chain is Cytoplasmic. Residues 14–34 (FLFNLIFWLCGCGLLGVGIWL) traverse the membrane as a helical segment. Over 35–55 (SVSQGNFATFSPSFPSLSAAN) the chain is Extracellular. A helical membrane pass occupies residues 56-76 (LVIAIGTIVMVTGFLGCLGAI). At 77 to 85 (KENKCLLLS) the chain is on the cytoplasmic side. A helical membrane pass occupies residues 86-106 (FFIILLIILLAELILLILFFV). Topologically, residues 107–203 (YMDKVNENAK…VKMWFDDNKH (97 aa)) are extracellular. Residue Asn-180 is glycosylated (N-linked (GlcNAc...) asparagine). The helical transmembrane segment at 204–224 (VLGTIGMCILIIQILGMAFSM) threads the bilayer. At 225-239 (TLFQQIHRTGKKYDA) the chain is on the cytoplasmic side.

Belongs to the tetraspanin (TM4SF) family.

It localises to the membrane. The protein is Tetraspanin-9 (tspan9) of Xenopus tropicalis (Western clawed frog).